Consider the following 333-residue polypeptide: MKKTTRKQKRPLLAILILAVILIVLSVISIGIGALYISPDAVVTNLLGLDHSFEFIIQQYRLPRIILAILAGAGLAAAGAILQGVIRNPLASPDVVGISKGSGLAAMAVILIFPESPVYVLPFSAFAGAAIIAVLLLMIARKKSIQPSSLALSGIALGAVCHAGMQYMMVKFPGDVNAALIWLTGSLWGRNWEEVKLLAPWLLILFPIVCILIPKLDLMSLGDELAQGLGENANRLRFILIFTAVALAGSCVAVVGSIGFIGLLAPHIARRLTGEKAKYLLPASALIGAIILLIADTLGRGIMPPVEIPAGILTAVIGAPYFLYLLKFEARKQ.

8 consecutive transmembrane segments (helical) span residues 12-32, 65-85, 95-115, 120-140, 194-214, 238-258, 279-299, and 306-326; these read LLAILILAVILIVLSVISIGI, IILAILAGAGLAAAGAILQGV, VVGISKGSGLAAMAVILIFPE, VLPFSAFAGAAIIAVLLLMIA, EVKLLAPWLLILFPIVCILIP, FILIFTAVALAGSCVAVVGSI, YLLPASALIGAIILLIADTLG, and VEIPAGILTAVIGAPYFLYLL.

This sequence belongs to the binding-protein-dependent transport system permease family. FecCD subfamily. The complex is composed of one ATP-binding protein (YfmF), two transmembrane proteins (YfmD and YfmE) and a solute-binding protein (YfmC).

It is found in the cell membrane. Functionally, part of the ABC transporter complex YfmCDEF involved in citrate-dependent Fe(3+) import. Involved in the translocation of the substrate across the membrane. The sequence is that of Fe(3+)-citrate import system permease protein YfmE (yfmE) from Bacillus subtilis (strain 168).